We begin with the raw amino-acid sequence, 219 residues long: 7-cyano-7-deazaguanine synthase (219 aa).

ATP is bound at residue 10–20 (FSGGQDSTTCL). The Zn(2+) site is built by cysteine 188, cysteine 196, cysteine 199, and cysteine 202.

It belongs to the QueC family. The cofactor is Zn(2+).

The catalysed reaction is 7-carboxy-7-deazaguanine + NH4(+) + ATP = 7-cyano-7-deazaguanine + ADP + phosphate + H2O + H(+). The protein operates within purine metabolism; 7-cyano-7-deazaguanine biosynthesis. Functionally, catalyzes the ATP-dependent conversion of 7-carboxy-7-deazaguanine (CDG) to 7-cyano-7-deazaguanine (preQ(0)). This is 7-cyano-7-deazaguanine synthase from Neisseria meningitidis serogroup B (strain ATCC BAA-335 / MC58).